Here is a 472-residue protein sequence, read N- to C-terminus: Excisase A (472 aa).

The region spanning E244 to I429 is the Tyr recombinase domain. Active-site residues include R287, K317, R384, and H407. Catalysis depends on Y416, which acts as the O-(3'-phospho-DNA)-tyrosine intermediate.

This sequence belongs to the XisA/XisC recombinase family.

Its function is as follows. Essential for DNA excision. Site specific recombinase necessary for the excision of the 11 kb nifD element during heterocyst differentiation. The polypeptide is Excisase A (xisA) (Nostoc sp. (strain PCC 7120 / SAG 25.82 / UTEX 2576)).